A 257-amino-acid chain; its full sequence is Cytosolic Fe-S cluster assembly factor NUBP2 homolog (257 aa).

14 to 21 (GKGGVGKS) contributes to the ATP binding site. The [4Fe-4S] cluster site is built by Cys188 and Cys191.

It belongs to the Mrp/NBP35 ATP-binding proteins family. NUBP2/CFD1 subfamily. Heterotetramer of 2 NUBP1 and 2 NUBP2 chains. It depends on [4Fe-4S] cluster as a cofactor.

The protein resides in the cytoplasm. In terms of biological role, component of the cytosolic iron-sulfur (Fe/S) protein assembly (CIA) machinery. Required for maturation of extramitochondrial Fe-S proteins. The NUBP1-NUBP2 heterotetramer forms a Fe-S scaffold complex, mediating the de novo assembly of an Fe-S cluster and its transfer to target apoproteins. The protein is Cytosolic Fe-S cluster assembly factor NUBP2 homolog of Culex quinquefasciatus (Southern house mosquito).